We begin with the raw amino-acid sequence, 382 residues long: Methylthioribose-1-phosphate isomerase (382 aa).

The active-site Proton donor is aspartate 261.

Belongs to the eIF-2B alpha/beta/delta subunits family. MtnA subfamily.

The protein localises to the cytoplasm. The protein resides in the nucleus. The enzyme catalyses 5-(methylsulfanyl)-alpha-D-ribose 1-phosphate = 5-(methylsulfanyl)-D-ribulose 1-phosphate. It functions in the pathway amino-acid biosynthesis; L-methionine biosynthesis via salvage pathway; L-methionine from S-methyl-5-thio-alpha-D-ribose 1-phosphate: step 1/6. Functionally, catalyzes the interconversion of methylthioribose-1-phosphate (MTR-1-P) into methylthioribulose-1-phosphate (MTRu-1-P). The polypeptide is Methylthioribose-1-phosphate isomerase (Ricinus communis (Castor bean)).